Here is a 101-residue protein sequence, read N- to C-terminus: Gamma-secretase subunit PEN-2 (101 aa).

Residues 1-17 are Cytoplasmic-facing; that stretch reads MNLERVSNEEKLNLCRK. Positions 18 to 36 form an intramembrane region, helical; the sequence is YYLGGFAFLPFLWLVNIFW. Over 37 to 57 the chain is Cytoplasmic; it reads FFREAFIVPAYTEQSQIKGYV. A helical membrane pass occupies residues 58–78; sequence WRSAVGFFLWVIVLSTWITIF. Residues 79 to 101 lie on the Lumenal side of the membrane; sequence QIYRPRWGALGDYLSFTIPLGTP.

The protein belongs to the PEN-2 family. As to quaternary structure, the functional gamma-secretase complex is composed of at least four polypeptides: a presenilin homodimer (PSEN1 or PSEN2), nicastrin (NCSTN), APH1 (APH1A or APH1B) and PSENEN.

It is found in the endoplasmic reticulum membrane. The protein localises to the golgi apparatus. It localises to the golgi stack membrane. The protein resides in the cell membrane. Its subcellular location is the membrane. Functionally, essential subunit of the gamma-secretase complex, an endoprotease complex that catalyzes the intramembrane cleavage of integral membrane proteins such as Notch receptors and APP (amyloid-beta precursor protein). The gamma-secretase complex plays a role in Notch and Wnt signaling cascades and regulation of downstream processes via its role in processing key regulatory proteins, and by regulating cytosolic CTNNB1 levels. PSENEN modulates both endoproteolysis of presenilin and gamma-secretase activity. In Bos taurus (Bovine), this protein is Gamma-secretase subunit PEN-2 (PSENEN).